Consider the following 933-residue polypeptide: Bifunctional uridylyltransferase/uridylyl-removing enzyme (933 aa).

The interval 1–379 is uridylyltransferase; it reads MAKISLKLDE…TFQRRKRKLA (379 aa). The tract at residues 380 to 736 is uridylyl-removing; it reads GTSDFIVDNH…VKTHQFEAVT (357 aa). In terms of domain architecture, HD spans 496 to 619; sequence VDEHLIRCIG…VQSVERLKLL (124 aa). 2 ACT domains span residues 737-818 and 848-922; these read EITV…EMIE and VIEV…GIAP.

The protein belongs to the GlnD family. Requires Mg(2+) as cofactor.

The enzyme catalyses [protein-PII]-L-tyrosine + UTP = [protein-PII]-uridylyl-L-tyrosine + diphosphate. The catalysed reaction is [protein-PII]-uridylyl-L-tyrosine + H2O = [protein-PII]-L-tyrosine + UMP + H(+). Its activity is regulated as follows. Uridylyltransferase (UTase) activity is inhibited by glutamine, while glutamine activates uridylyl-removing (UR) activity. Its function is as follows. Modifies, by uridylylation and deuridylylation, the PII regulatory proteins (GlnB and homologs), in response to the nitrogen status of the cell that GlnD senses through the glutamine level. Under low glutamine levels, catalyzes the conversion of the PII proteins and UTP to PII-UMP and PPi, while under higher glutamine levels, GlnD hydrolyzes PII-UMP to PII and UMP (deuridylylation). Thus, controls uridylylation state and activity of the PII proteins, and plays an important role in the regulation of nitrogen fixation and metabolism. The chain is Bifunctional uridylyltransferase/uridylyl-removing enzyme from Mesorhizobium japonicum (strain LMG 29417 / CECT 9101 / MAFF 303099) (Mesorhizobium loti (strain MAFF 303099)).